Reading from the N-terminus, the 220-residue chain is Small ribosomal subunit protein uS2 (220 aa).

Belongs to the universal ribosomal protein uS2 family.

This chain is Small ribosomal subunit protein uS2, found in Methanococcus maripaludis (strain DSM 14266 / JCM 13030 / NBRC 101832 / S2 / LL).